The sequence spans 324 residues: DNA-directed RNA polymerase subunit alpha (324 aa).

The tract at residues 1-230 is alpha N-terminal domain (alpha-NTD); sequence MQSSGLLKPR…EQLSVFADLE (230 aa). An alpha C-terminal domain (alpha-CTD) region spans residues 244–324; that stretch reads VDPVLLRPVD…NWPPAGLEKA (81 aa).

This sequence belongs to the RNA polymerase alpha chain family. In terms of assembly, homodimer. The RNAP catalytic core consists of 2 alpha, 1 beta, 1 beta' and 1 omega subunit. When a sigma factor is associated with the core the holoenzyme is formed, which can initiate transcription.

It catalyses the reaction RNA(n) + a ribonucleoside 5'-triphosphate = RNA(n+1) + diphosphate. DNA-dependent RNA polymerase catalyzes the transcription of DNA into RNA using the four ribonucleoside triphosphates as substrates. The protein is DNA-directed RNA polymerase subunit alpha of Dechloromonas aromatica (strain RCB).